The primary structure comprises 253 residues: 5'-nucleotidase SurE (253 aa).

A divalent metal cation is bound by residues Asp-8, Asp-9, Ser-39, and Asn-92.

This sequence belongs to the SurE nucleotidase family. The cofactor is a divalent metal cation.

The protein resides in the cytoplasm. It catalyses the reaction a ribonucleoside 5'-phosphate + H2O = a ribonucleoside + phosphate. Its function is as follows. Nucleotidase that shows phosphatase activity on nucleoside 5'-monophosphates. This Burkholderia pseudomallei (strain 668) protein is 5'-nucleotidase SurE.